A 61-amino-acid chain; its full sequence is Small ribosomal subunit protein uS14B (61 aa).

Residues cysteine 24, cysteine 27, cysteine 40, and cysteine 43 each contribute to the Zn(2+) site.

The protein belongs to the universal ribosomal protein uS14 family. Zinc-binding uS14 subfamily. Part of the 30S ribosomal subunit. Contacts proteins S3 and S10. Zn(2+) serves as cofactor.

Binds 16S rRNA, required for the assembly of 30S particles and may also be responsible for determining the conformation of the 16S rRNA at the A site. This chain is Small ribosomal subunit protein uS14B, found in Streptococcus pyogenes serotype M6 (strain ATCC BAA-946 / MGAS10394).